The primary structure comprises 590 residues: Mannosyl-oligosaccharide 1,2-alpha-mannosidase mans-2 (590 aa).

The Cytoplasmic segment spans residues 1 to 9; sequence MKTVRFNKQ. The helical; Signal-anchor for type II membrane protein transmembrane segment at 10-30 threads the bilayer; the sequence is ALAILAACFIFLLCVVCYFSA. At 31–590 the chain is on the lumenal side; it reads SSESHNAVVV…EAHPVPVLTN (560 aa). Over residues 88 to 102 the composition is skewed to basic and acidic residues; that stretch reads PARVESKPPGEKTST. Residues 88-112 form a disordered region; it reads PARVESKPPGEKTSTEPEETGVGKA. Residues asparagine 156, asparagine 212, asparagine 373, and asparagine 402 are each glycosylated (N-linked (GlcNAc...) asparagine). Cysteine 423 and cysteine 456 form a disulfide bridge. The active-site Proton donor is glutamate 470. Threonine 580 is a Ca(2+) binding site.

The protein belongs to the glycosyl hydrolase 47 family. Ca(2+) serves as cofactor.

The protein resides in the membrane. It catalyses the reaction N(4)-(alpha-D-Man-(1-&gt;2)-alpha-D-Man-(1-&gt;2)-alpha-D-Man-(1-&gt;3)-[alpha-D-Man-(1-&gt;2)-alpha-D-Man-(1-&gt;3)-[alpha-D-Man-(1-&gt;2)-alpha-D-Man-(1-&gt;6)]-alpha-D-Man-(1-&gt;6)]-beta-D-Man-(1-&gt;4)-beta-D-GlcNAc-(1-&gt;4)-beta-D-GlcNAc)-L-asparaginyl-[protein] (N-glucan mannose isomer 9A1,2,3B1,2,3) + 4 H2O = N(4)-(alpha-D-Man-(1-&gt;3)-[alpha-D-Man-(1-&gt;3)-[alpha-D-Man-(1-&gt;6)]-alpha-D-Man-(1-&gt;6)]-beta-D-Man-(1-&gt;4)-beta-D-GlcNAc-(1-&gt;4)-beta-D-GlcNAc)-L-asparaginyl-[protein] (N-glucan mannose isomer 5A1,2) + 4 beta-D-mannose. The enzyme catalyses N(4)-(alpha-D-Man-(1-&gt;2)-alpha-D-Man-(1-&gt;2)-alpha-D-Man-(1-&gt;3)-[alpha-D-Man-(1-&gt;3)-[alpha-D-Man-(1-&gt;2)-alpha-D-Man-(1-&gt;6)]-alpha-D-Man-(1-&gt;6)]-beta-D-Man-(1-&gt;4)-beta-D-GlcNAc-(1-&gt;4)-beta-D-GlcNAc)-L-asparaginyl-[protein] (N-glucan mannose isomer 8A1,2,3B1,3) + 3 H2O = N(4)-(alpha-D-Man-(1-&gt;3)-[alpha-D-Man-(1-&gt;3)-[alpha-D-Man-(1-&gt;6)]-alpha-D-Man-(1-&gt;6)]-beta-D-Man-(1-&gt;4)-beta-D-GlcNAc-(1-&gt;4)-beta-D-GlcNAc)-L-asparaginyl-[protein] (N-glucan mannose isomer 5A1,2) + 3 beta-D-mannose. Its pathway is protein modification; protein glycosylation. Its function is as follows. Involved in the maturation of Asn-linked oligosaccharides. Progressively trim alpha-1,2-linked mannose residues from Man(9)GlcNAc(2) to produce Man(5)GlcNAc(2). In Caenorhabditis elegans, this protein is Mannosyl-oligosaccharide 1,2-alpha-mannosidase mans-2.